Reading from the N-terminus, the 423-residue chain is Imidazolonepropionase (423 aa).

His91 and His93 together coordinate Fe(3+). Zn(2+) is bound by residues His91 and His93. 4-imidazolone-5-propanoate is bound by residues Arg100, Tyr163, and His193. Tyr163 serves as a coordination point for N-formimidoyl-L-glutamate. His257 is a Fe(3+) binding site. Residue His257 participates in Zn(2+) binding. Gln260 contributes to the 4-imidazolone-5-propanoate binding site. Asp331 provides a ligand contact to Fe(3+). Asp331 lines the Zn(2+) pocket. Residues Asn333 and Gly335 each coordinate N-formimidoyl-L-glutamate. Thr336 lines the 4-imidazolone-5-propanoate pocket.

The protein belongs to the metallo-dependent hydrolases superfamily. HutI family. It depends on Zn(2+) as a cofactor. Fe(3+) is required as a cofactor.

The protein localises to the cytoplasm. It carries out the reaction 4-imidazolone-5-propanoate + H2O = N-formimidoyl-L-glutamate. The protein operates within amino-acid degradation; L-histidine degradation into L-glutamate; N-formimidoyl-L-glutamate from L-histidine: step 3/3. Its function is as follows. Catalyzes the hydrolytic cleavage of the carbon-nitrogen bond in imidazolone-5-propanoate to yield N-formimidoyl-L-glutamate. It is the third step in the universal histidine degradation pathway. The protein is Imidazolonepropionase of Bdellovibrio bacteriovorus (strain ATCC 15356 / DSM 50701 / NCIMB 9529 / HD100).